Here is a 508-residue protein sequence, read N- to C-terminus: Photosystem II CP47 reaction center protein (508 aa).

6 helical membrane passes run 21–36 (AVHI…WAGS), 101–115 (ILFS…IWHW), 140–156 (GIHL…FGAF), 203–218 (IAAG…FHLS), 237–252 (VLSS…AFVV), and 457–472 (SFAL…HGAR).

This sequence belongs to the PsbB/PsbC family. PsbB subfamily. PSII is composed of 1 copy each of membrane proteins PsbA, PsbB, PsbC, PsbD, PsbE, PsbF, PsbH, PsbI, PsbJ, PsbK, PsbL, PsbM, PsbT, PsbX, PsbY, PsbZ, Psb30/Ycf12, at least 3 peripheral proteins of the oxygen-evolving complex and a large number of cofactors. It forms dimeric complexes. Binds multiple chlorophylls. PSII binds additional chlorophylls, carotenoids and specific lipids. is required as a cofactor.

The protein localises to the plastid. The protein resides in the chloroplast thylakoid membrane. In terms of biological role, one of the components of the core complex of photosystem II (PSII). It binds chlorophyll and helps catalyze the primary light-induced photochemical processes of PSII. PSII is a light-driven water:plastoquinone oxidoreductase, using light energy to abstract electrons from H(2)O, generating O(2) and a proton gradient subsequently used for ATP formation. This is Photosystem II CP47 reaction center protein from Oenothera argillicola (Appalachian evening primrose).